A 223-amino-acid chain; its full sequence is Phosphoribosylformylglycinamidine synthase subunit PurQ (223 aa).

The 222-residue stretch at 2-223 folds into the Glutamine amidotransferase type-1 domain; that stretch reads KVAIIRFPGT…LLENFINFNF (222 aa). The active-site Nucleophile is the Cys-84. Residues His-192 and Glu-194 contribute to the active site.

Part of the FGAM synthase complex composed of 1 PurL, 1 PurQ and 2 PurS subunits.

The protein resides in the cytoplasm. The enzyme catalyses N(2)-formyl-N(1)-(5-phospho-beta-D-ribosyl)glycinamide + L-glutamine + ATP + H2O = 2-formamido-N(1)-(5-O-phospho-beta-D-ribosyl)acetamidine + L-glutamate + ADP + phosphate + H(+). It catalyses the reaction L-glutamine + H2O = L-glutamate + NH4(+). Its pathway is purine metabolism; IMP biosynthesis via de novo pathway; 5-amino-1-(5-phospho-D-ribosyl)imidazole from N(2)-formyl-N(1)-(5-phospho-D-ribosyl)glycinamide: step 1/2. Part of the phosphoribosylformylglycinamidine synthase complex involved in the purines biosynthetic pathway. Catalyzes the ATP-dependent conversion of formylglycinamide ribonucleotide (FGAR) and glutamine to yield formylglycinamidine ribonucleotide (FGAM) and glutamate. The FGAM synthase complex is composed of three subunits. PurQ produces an ammonia molecule by converting glutamine to glutamate. PurL transfers the ammonia molecule to FGAR to form FGAM in an ATP-dependent manner. PurS interacts with PurQ and PurL and is thought to assist in the transfer of the ammonia molecule from PurQ to PurL. This chain is Phosphoribosylformylglycinamidine synthase subunit PurQ, found in Campylobacter jejuni subsp. jejuni serotype O:2 (strain ATCC 700819 / NCTC 11168).